The primary structure comprises 197 residues: Histone chaperone asf1b-A (197 aa).

This sequence belongs to the ASF1 family. As to quaternary structure, interacts with histone H3 and histone H4.

The protein resides in the nucleus. In terms of biological role, histone chaperone that facilitates histone deposition and histone exchange and removal during nucleosome assembly and disassembly. In Danio rerio (Zebrafish), this protein is Histone chaperone asf1b-A (asf1ba).